The sequence spans 296 residues: Ribosomal RNA small subunit methyltransferase H (296 aa).

S-adenosyl-L-methionine contacts are provided by residues 30-32 (GGH), D49, F76, D97, and Q104.

This sequence belongs to the methyltransferase superfamily. RsmH family.

Its subcellular location is the cytoplasm. It carries out the reaction cytidine(1402) in 16S rRNA + S-adenosyl-L-methionine = N(4)-methylcytidine(1402) in 16S rRNA + S-adenosyl-L-homocysteine + H(+). Its function is as follows. Specifically methylates the N4 position of cytidine in position 1402 (C1402) of 16S rRNA. The polypeptide is Ribosomal RNA small subunit methyltransferase H (Mesomycoplasma hyopneumoniae (strain 232) (Mycoplasma hyopneumoniae)).